Here is a 283-residue protein sequence, read N- to C-terminus: Pantothenate synthetase (283 aa).

30–37 contributes to the ATP binding site; it reads MGYLHEGH. The Proton donor role is filled by His37. Position 61 (Gln61) interacts with (R)-pantoate. Gln61 contributes to the beta-alanine binding site. An ATP-binding site is contributed by 147-150; the sequence is GQKD. Residue Gln153 coordinates (R)-pantoate. ATP-binding positions include Val176 and 184–187; that span reads LSSR.

The protein belongs to the pantothenate synthetase family. In terms of assembly, homodimer.

The protein localises to the cytoplasm. It carries out the reaction (R)-pantoate + beta-alanine + ATP = (R)-pantothenate + AMP + diphosphate + H(+). Its pathway is cofactor biosynthesis; (R)-pantothenate biosynthesis; (R)-pantothenate from (R)-pantoate and beta-alanine: step 1/1. In terms of biological role, catalyzes the condensation of pantoate with beta-alanine in an ATP-dependent reaction via a pantoyl-adenylate intermediate. In Moorella thermoacetica (strain ATCC 39073 / JCM 9320), this protein is Pantothenate synthetase.